The chain runs to 411 residues: Corticotropin-releasing factor receptor 2 (411 aa).

Positions 1–19 (MDAALLHSLLEANCSLALA) form a signal peptide, not cleaved. Over 1 to 108 (MDAALLHSLL…EPILDDKQRK (108 aa)) the chain is Extracellular. N-linked (GlcNAc...) asparagine glycans are attached at residues Asn13, Asn41, Asn74, Asn86, and Asn94. 4 disulfide bridges follow: Cys14-Cys50, Cys40-Cys83, Trp51-Arg77, and Cys64-Cys98. Residues 109-139 (YDLHYRIALVVNYLGHCVSVAALVAAFLLFL) form a helical membrane-spanning segment. Topologically, residues 140 to 146 (ALRSIRC) are cytoplasmic. The helical transmembrane segment at 147-171 (LRNVIHWNLITTFILRNVMWFLLQL) threads the bilayer. The Extracellular portion of the chain corresponds to 172-185 (VDHEVHESNEVWCR). An intrachain disulfide couples Cys184 to Cys254. The chain crosses the membrane as a helical span at residues 186 to 214 (CITTIFNYFVVTNFFWMFVEGCYLHTAIV). The Cytoplasmic segment spans residues 215-221 (MTYSTER). The chain crosses the membrane as a helical span at residues 222–249 (LRKCLFLFIGWCIPFPIIVAWAIGKLYY). Residues 250–265 (ENEQCWFGKEPGDLVD) lie on the Extracellular side of the membrane. A helical membrane pass occupies residues 266-291 (YIYQGPIILVLLINFVFLFNIVRILM). Residues 292-302 (TKLRASTTSET) lie on the Cytoplasmic side of the membrane. The helical transmembrane segment at 303 to 327 (IQYRKAVKATLVLLPLLGITYMLFF) threads the bilayer. Residues 328 to 334 (VNPGEDD) are Extracellular-facing. A helical transmembrane segment spans residues 335 to 364 (LSQIMFIYFNSFLQSFQGFFVSVFYCFFNG). Residues 365–411 (EVRSAVRKRWHRWQDHHSLRVPMARAMSIPTSPTRISFHSIKQTAAV) lie on the Cytoplasmic side of the membrane.

Belongs to the G-protein coupled receptor 2 family. As to quaternary structure, monomer. Interacts (via N-terminal extracellular domain) with CRF, UCN, UCN2 and UCN3. Has highest affinity for UCN, and considerably lower affinity for CRF, UNC2 and UCN3. An N-glycosylation site within the signal peptide impedes its proper cleavage and function.

It is found in the cell membrane. In terms of biological role, G-protein coupled receptor for CRH (corticotropin-releasing factor), UCN (urocortin), UCN2 and UCN3. Has high affinity for UCN. Ligand binding causes a conformation change that triggers signaling via guanine nucleotide-binding proteins (G proteins) and down-stream effectors, such as adenylate cyclase. Promotes the activation of adenylate cyclase, leading to increased intracellular cAMP levels. In Homo sapiens (Human), this protein is Corticotropin-releasing factor receptor 2 (CRHR2).